Consider the following 353-residue polypeptide: Serine/threonine-protein phosphatase 2A activator 1 (353 aa).

The interval Ala331 to Arg353 is disordered. Residues Ser343–Arg353 show a composition bias toward polar residues.

The protein belongs to the PTPA-type PPIase family.

It is found in the cytoplasm. It localises to the nucleus. The catalysed reaction is [protein]-peptidylproline (omega=180) = [protein]-peptidylproline (omega=0). Its function is as follows. PPIases accelerate the folding of proteins. It catalyzes the cis-trans isomerization of proline imidic peptide bonds in oligopeptides. Acts as a regulatory subunit for PP2A-like phosphatases modulating their activity or substrate specificity, probably by inducing a conformational change in the catalytic subunit, a direct target of the PPIase. Can reactivate inactive phosphatase PP2A-phosphatase methylesterase complexes (PP2Ai) in presence of ATP and Mg(2+) by dissociating the inactive form from the complex. This chain is Serine/threonine-protein phosphatase 2A activator 1 (RRD1), found in Kluyveromyces lactis (strain ATCC 8585 / CBS 2359 / DSM 70799 / NBRC 1267 / NRRL Y-1140 / WM37) (Yeast).